Here is a 262-residue protein sequence, read N- to C-terminus: Type III pantothenate kinase (262 aa).

7–14 (DIGNTRLK) provides a ligand contact to ATP. Substrate is bound by residues tyrosine 96 and 103-106 (GSDR). The active-site Proton acceptor is aspartate 105. Residue threonine 137 coordinates ATP. Threonine 187 is a substrate binding site.

Belongs to the type III pantothenate kinase family. In terms of assembly, homodimer. It depends on NH4(+) as a cofactor. Requires K(+) as cofactor.

The protein localises to the cytoplasm. It carries out the reaction (R)-pantothenate + ATP = (R)-4'-phosphopantothenate + ADP + H(+). It participates in cofactor biosynthesis; coenzyme A biosynthesis; CoA from (R)-pantothenate: step 1/5. Functionally, catalyzes the phosphorylation of pantothenate (Pan), the first step in CoA biosynthesis. This Leptothrix cholodnii (strain ATCC 51168 / LMG 8142 / SP-6) (Leptothrix discophora (strain SP-6)) protein is Type III pantothenate kinase.